A 1196-amino-acid polypeptide reads, in one-letter code: DNA excision repair protein ERCC-5 homolog (1196 aa).

Residues 1-78 are N-domain; it reads MGVQGLWKLL…RIRPIFVFDG (78 aa). Aspartate 30 is a Mg(2+) binding site. A DNA-binding; may bind to the undamaged single-strand DNA of the DNA repair bubble region spans residues 31 to 67; it reads ISIWLNQAVKGARDRQGNAIQNAHLLTLFHRLCKLLF. Aspartate 77 provides a ligand contact to Mg(2+). The segment at 79 to 818 is spacer region; the sequence is EAPLLKRQTL…LQLFGIPYIV (740 aa). Disordered stretches follow at residues 152 to 176, 302 to 321, 629 to 661, and 722 to 758; these read PLED…MNQK, KQEE…NSSQ, QTTQ…SSAM, and AVEE…DDVS. Over residues 154–168 the composition is skewed to acidic residues; sequence EDNENNSSEEEEERE. Polar residues predominate over residues 311–321; it reads PPQSITFNSSQ. Positions 722–731 are enriched in polar residues; sequence AVEEGNSGSQ. Over residues 734-755 the composition is skewed to basic and acidic residues; sequence PLEHDSGEPHEQSNSEESKDLD. The interval 819-914 is I-domain; it reads APMEAEAQCA…VSAMEILNEF (96 aa). 4 residues coordinate Mg(2+): glutamate 822, glutamate 824, aspartate 843, and aspartate 845. Residues 853–869 form a DNA-binding; may bind to the undamaged single-strand DNA of the DNA repair bubble region; that stretch reads HVYKNFFSQNKHVEYYQ. Residues 881 to 913 are DNA-binding; H2TH (helix-2turn-helix) motif which binds double-stranded DNA; sequence RSKLINLAYLLGSDYTEGIPTVGYVSAMEILNE. A Mg(2+)-binding site is contributed by aspartate 894. The interval 945 to 951 is DNA-binding; may bind double-stranded DNA; sequence TKVKKKL. Positions 1075-1196 are disordered; sequence CTNQRKGQKT…KTMKETVKRK (122 aa). A Nuclear localization signal 1 motif is present at residues 1079–1095; that stretch reads RKGQKTNTKSQGTKRRK. The segment covering 1119-1130 has biased composition (low complexity); sequence SSKAYSSDGSSS. Over residues 1142–1158 the composition is skewed to polar residues; it reads KQSQSGIVGRQKASNKV. The Nuclear localization signal 2 motif lies at 1179-1196; the sequence is FQGKKTKSKTMKETVKRK.

This sequence belongs to the XPG/RAD2 endonuclease family. XPG subfamily. As to quaternary structure, monomer. Homodimer. Mg(2+) is required as a cofactor.

It localises to the nucleus. It is found in the chromosome. Its function is as follows. Single-stranded structure-specific DNA endonuclease involved in DNA excision repair. Makes the 3'incision in DNA nucleotide excision repair (NER). Binds and bends DNA repair bubble substrate and breaks base stacking at the single-strand/double-strand DNA junction of the DNA bubble. Plays a role in base excision repair (BER) by promoting the binding of DNA glycosylase to its substrate and increasing DNA glycosylase catalytic activity that removes oxidized pyrimidines from DNA. Involved in transcription-coupled nucleotide excision repair (TCR) which allows RNA polymerase II-blocking lesions to be rapidly removed from the transcribed strand of active genes. Required for DNA replication fork maintenance and preservation of genomic stability. Involved in homologous recombination repair (HRR) induced by DNA replication stress. During HRR, binds to the replication fork with high specificity and stabilizes it. In Xenopus laevis (African clawed frog), this protein is DNA excision repair protein ERCC-5 homolog (ercc5).